Here is a 212-residue protein sequence, read N- to C-terminus: Cytidylate kinase (212 aa).

11–19 (GPAASGKGT) contacts ATP. Residues 50-69 (GGDPADPAASEEQARSLSRL) form a disordered region.

Belongs to the cytidylate kinase family. Type 1 subfamily.

Its subcellular location is the cytoplasm. It catalyses the reaction CMP + ATP = CDP + ADP. The catalysed reaction is dCMP + ATP = dCDP + ADP. The sequence is that of Cytidylate kinase from Acidiphilium cryptum (strain JF-5).